The sequence spans 256 residues: Major prion protein (256 aa).

An N-terminal signal peptide occupies residues 1–24 (MVKSHIGSWILVLFVAMWSDVGLC). The interaction with GRB2, ERI3 and SYN1 stretch occupies residues 25 to 233 (KKRPKPGGGW…ESEAYYQRGA (209 aa)). Positions 28-110 (PKPGGGWNTG…QWNKPSKPKT (83 aa)) are disordered. 5 repeat units span residues 54–62 (PQGGGGWGQ), 63–70 (PHGGGWGQ), 71–78 (PHGGGWGQ), 79–86 (PHGGGWGQ), and 87–95 (PHGGGGWGQ). The 5 X 8 AA tandem repeats of P-H-G-G-G-W-G-Q stretch occupies residues 54–95 (PQGGGGWGQPHGGGWGQPHGGGWGQPHGGGWGQPHGGGGWGQ). Residues 55–97 (QGGGGWGQPHGGGWGQPHGGGWGQPHGGGWGQPHGGGGWGQGG) are compositionally biased toward gly residues. Residues His-64, Gly-65, Gly-66, His-72, Gly-73, Gly-74, His-80, Gly-81, Gly-82, His-88, Gly-90, and Gly-91 each contribute to the Cu(2+) site. Cys-182 and Cys-217 are joined by a disulfide. N-linked (GlcNAc...) asparagine glycans are attached at residues Asn-184 and Asn-200. Residue Ala-233 is the site of GPI-anchor amidated alanine attachment. The propeptide at 234–256 (SVILFSSPPVILLISFLIFLIVG) is removed in mature form.

Belongs to the prion family. In terms of assembly, monomer and homodimer. Has a tendency to aggregate into amyloid fibrils containing a cross-beta spine, formed by a steric zipper of superposed beta-strands. Soluble oligomers may represent an intermediate stage on the path to fibril formation. Copper binding may promote oligomerization. Interacts with GRB2, APP, ERI3/PRNPIP and SYN1. Mislocalized cytosolically exposed PrP interacts with MGRN1; this interaction alters MGRN1 subcellular location and causes lysosomal enlargement. Interacts with KIAA1191.

The protein resides in the cell membrane. It is found in the golgi apparatus. Functionally, its primary physiological function is unclear. Has cytoprotective activity against internal or environmental stresses. May play a role in neuronal development and synaptic plasticity. May be required for neuronal myelin sheath maintenance. May play a role in iron uptake and iron homeostasis. Soluble oligomers are toxic to cultured neuroblastoma cells and induce apoptosis (in vitro). Association with GPC1 (via its heparan sulfate chains) targets PRNP to lipid rafts. Also provides Cu(2+) or Zn(2+) for the ascorbate-mediated GPC1 deaminase degradation of its heparan sulfate side chains. The chain is Major prion protein (PRNP) from Cervus elaphus (Red deer).